A 162-amino-acid chain; its full sequence is Nucleotide-binding protein CMM_2802 (162 aa).

This sequence belongs to the YajQ family.

In terms of biological role, nucleotide-binding protein. The polypeptide is Nucleotide-binding protein CMM_2802 (Clavibacter michiganensis subsp. michiganensis (strain NCPPB 382)).